Reading from the N-terminus, the 130-residue chain is Keratin, high-sulfur matrix protein, IIIA3A (130 aa).

As to expression, wool.

In terms of biological role, the keratin products of mammalian epidermal derivatives such as wool and hair consist of microfibrils embedded in a rigid matrix of other proteins. The matrix proteins include the high-sulfur and high-tyrosine keratins, having molecular weights of 6-20 kDa, whereas the microfibrils contain the larger, low-sulfur keratins (40-56 kDa). This Ovis aries (Sheep) protein is Keratin, high-sulfur matrix protein, IIIA3A.